Reading from the N-terminus, the 346-residue chain is Isopentenyl-diphosphate delta-isomerase (346 aa).

12-13 (RK) contributes to the substrate binding site. FMN-binding positions include 67-69 (ALT), Ser-97, and Asn-126. 97–99 (SQR) contacts substrate. Gln-156 contacts substrate. Residue Glu-157 coordinates Mg(2+). FMN is bound by residues Lys-188, Thr-218, 263–265 (GIR), and 284–285 (AG).

The protein belongs to the IPP isomerase type 2 family. In terms of assembly, homooctamer. Dimer of tetramers. Requires FMN as cofactor. NADPH serves as cofactor. It depends on Mg(2+) as a cofactor.

It is found in the cytoplasm. It carries out the reaction isopentenyl diphosphate = dimethylallyl diphosphate. Functionally, involved in the biosynthesis of isoprenoids. Catalyzes the 1,3-allylic rearrangement of the homoallylic substrate isopentenyl (IPP) to its allylic isomer, dimethylallyl diphosphate (DMAPP). This chain is Isopentenyl-diphosphate delta-isomerase, found in Moorella thermoacetica (strain ATCC 39073 / JCM 9320).